We begin with the raw amino-acid sequence, 668 residues long: Break repair meiotic recombinase recruitment factor 1 (668 aa).

5 disordered regions span residues 1 to 142 (MTKR…AQSP), 155 to 333 (LQEA…GCSS), 349 to 465 (LEER…GGQN), 482 to 521 (VLEHREIADDPLQEPGAQQGIPDTTSELAGQRDHLPHSAD), and 642 to 668 (LGGKAPLPYPSKGPGNIPRGDPPWREL). Residues 114–125 (TRKEEMKDEDRG) are compositionally biased toward basic and acidic residues. The span at 166-180 (QADSARPEQSSQSPV) shows a compositional bias: polar residues. Residues 208–251 (SQDHLSEQGADDSKPETDRVPGDGGQKEHLPSIDSEGEKPDRGA) show a composition bias toward basic and acidic residues. Residues 279 to 296 (TPASAPTSGPAPGLGPAS) are compositionally biased toward low complexity. Positions 305–316 (AQGSPDPQQTPS) are enriched in polar residues. Position 370 is a phosphoserine (S370). A compositionally biased stretch (low complexity) spans 391 to 400 (TGETTGESGE).

As to quaternary structure, interacts with HSF2BP (via N-terminus) and BRCA2; the interaction with HSF2BP is direct and allows the formation of a ternary complex. The complex BRME1:HSF2BP:BRCA2 interacts with SPATA22, MEIOB and RAD51.

Its subcellular location is the chromosome. Meiotic recombination factor component of recombination bridges involved in meiotic double-strand break repair. Modulates the localization of recombinases DMC1:RAD51 to meiotic double-strand break (DSB) sites through the interaction with and stabilization of the BRCA2:HSF2BP complex during meiotic recombination. Indispensable for the DSB repair, homologous synapsis, and crossover formation that are needed for progression past metaphase I, is essential for spermatogenesis and male fertility. In Homo sapiens (Human), this protein is Break repair meiotic recombinase recruitment factor 1.